The sequence spans 59 residues: Cecropin-C (59 aa).

The N-terminal stretch at 1–23 (MNFKLIFLVALVLMAAFLGQTEG) is a signal peptide. Val-58 carries the valine amide modification.

It belongs to the cecropin family.

It is found in the secreted. Its function is as follows. Cecropins have lytic and antibacterial activity against several Gram-positive and Gram-negative bacteria. This chain is Cecropin-C (CecC), found in Anopheles gambiae (African malaria mosquito).